Consider the following 296-residue polypeptide: Putative methyltransferase HI_1523 (296 aa).

The protein belongs to the N(4)/N(6)-methyltransferase family.

The polypeptide is Putative methyltransferase HI_1523 (Haemophilus influenzae (strain ATCC 51907 / DSM 11121 / KW20 / Rd)).